Reading from the N-terminus, the 24-residue chain is Xenoposin precursor fragment B2 (24 aa).

In terms of tissue distribution, expressed by the skin glands.

It is found in the secreted. In terms of biological role, has antimicrobial activity against Gram-negative bacterium E.coli ATCC 25922 (MIC=100 uM), Gram-positive bacterium S.auerus ATCC 25923 (MIC=25 uM). The protein is Xenoposin precursor fragment B2 of Xenopus borealis (Kenyan clawed frog).